The primary structure comprises 364 residues: Melatonin receptor type 1B (364 aa).

The first 28 residues, 1–28 (MPDNSSIANCCAASGLAARPSWPGSAEA), serve as a signal peptide directing secretion. Residues 29-45 (EPPETPRAPWVAPMLST) are Extracellular-facing. Residues 46–66 (VVIVTTAVDFVGNLLVILSVL) form a helical membrane-spanning segment. The Cytoplasmic segment spans residues 67 to 81 (RNRKLRNAGNLFVVN). Residues 82–102 (LALADLVVALYPYPLILVAIL) form a helical membrane-spanning segment. Topologically, residues 103–115 (HDGWVLGEIHCKA) are extracellular. A disulfide bond links Cys-113 and Cys-190. The helical transmembrane segment at 116–136 (SAFVMGLSVIGSVFNITAIAI) threads the bilayer. Residues 137–158 (NRYWCICHSATYHRACSQWHAP) are Cytoplasmic-facing. The helical transmembrane segment at 159–179 (LYISLIWLLTLVALVPNFFVG) threads the bilayer. Residues 180-200 (SLEYDPRIYSCTFIQTASTQY) lie on the Extracellular side of the membrane. The helical transmembrane segment at 201 to 221 (TMAVVAIHFLLPIAVVSFCYL) threads the bilayer. Residues 222–255 (RIWILVLQARRKAKAERKLRLRPSDLRSFLTMFA) are Cytoplasmic-facing. Residues 256-276 (VFVVFAICWAPLNCIGLAVAI) form a helical membrane-spanning segment. The Extracellular segment spans residues 277-287 (NPEAMALQIPE). Residues 288 to 308 (GLFVTSYFLAYFNSCLNAIVY) form a helical membrane-spanning segment. Over 309 to 364 (GLLNQNFRREYKRILSALWSTGRCFHDASKCHLTEDLQGPVPPAAMATIPVQEGAL) the chain is Cytoplasmic.

It belongs to the G-protein coupled receptor 1 family. In terms of tissue distribution, expressed in the hippocampus, kidney, and ovary.

Its subcellular location is the cell membrane. In terms of biological role, high affinity receptor for melatonin. The activity of this receptor is mediated by pertussis toxin sensitive G proteins that inhibits adenylate cyclase activity. This chain is Melatonin receptor type 1B, found in Rattus norvegicus (Rat).